We begin with the raw amino-acid sequence, 368 residues long: UPF0284 protein SYNPCC7002_A1742 (368 aa).

The protein belongs to the UPF0284 family.

This chain is UPF0284 protein SYNPCC7002_A1742, found in Picosynechococcus sp. (strain ATCC 27264 / PCC 7002 / PR-6) (Agmenellum quadruplicatum).